The primary structure comprises 275 residues: Interleukin-2 receptor subunit alpha (275 aa).

A signal peptide spans 1-21 (MEPSLLLWGILTFVVVHGHVT). One can recognise a Sushi 1 domain in the interval 22-84 (ELCDENPPDI…SWENQCRCIS (63 aa)). Residues 22-243 (ELCDENPPDI…ESFVFTTEYQ (222 aa)) lie on the Extracellular side of the membrane. 3 disulfide bridges follow: Cys24-Cys67, Cys49-Cys80, and Cys51-Cys82. 2 N-linked (GlcNAc...) asparagine glycosylation sites follow: Asn60 and Asn70. Residues 91–118 (DGQIIPKPEEQKGKSPMGMQSQMQPTDQ) form a disordered region. A compositionally biased stretch (polar residues) spans 108–118 (GMQSQMQPTDQ). In terms of domain architecture, Sushi 2 spans 123 to 186 (GHCREPPPWE…WTQPRLQCLS (64 aa)). 2 disulfides stabilise this stretch: Cys125/Cys168 and Cys152/Cys184. Residues 188 to 213 (RSDGWFPDDEEPQASTDAALGSDTSC) are disordered. The chain crosses the membrane as a helical span at residues 244-262 (IAVAGCVLLLISIVLLSGL). Topologically, residues 263–275 (TWQRRWRKSRRTI) are cytoplasmic.

Non-covalent dimer of an alpha and a beta subunit. IL2R exists in 3 different forms: a high affinity dimer, an intermediate affinity monomer (beta subunit), and a low affinity monomer (alpha subunit). The high and intermediate affinity forms also associate with a gamma subunit.

It localises to the membrane. Functionally, receptor for interleukin-2. The receptor is involved in the regulation of immune tolerance by controlling regulatory T cells (TREGs) activity. TREGs suppress the activation and expansion of autoreactive T-cells. In Felis catus (Cat), this protein is Interleukin-2 receptor subunit alpha (IL2RA).